We begin with the raw amino-acid sequence, 208 residues long: LexA repressor (208 aa).

A DNA-binding region (H-T-H motif) is located at residues 28–48; the sequence is RAEIARELGFRSANAAEEHLK. Active-site for autocatalytic cleavage activity residues include Ser-125 and Lys-162.

This sequence belongs to the peptidase S24 family. In terms of assembly, homodimer.

It carries out the reaction Hydrolysis of Ala-|-Gly bond in repressor LexA.. Its function is as follows. Represses a number of genes involved in the response to DNA damage (SOS response), including recA and lexA. In the presence of single-stranded DNA, RecA interacts with LexA causing an autocatalytic cleavage which disrupts the DNA-binding part of LexA, leading to derepression of the SOS regulon and eventually DNA repair. This chain is LexA repressor, found in Aliivibrio fischeri (strain ATCC 700601 / ES114) (Vibrio fischeri).